We begin with the raw amino-acid sequence, 951 residues long: Serine/threonine-protein phosphatase 4 regulatory subunit 1 (951 aa).

HEAT repeat units lie at residues 26–63 (ESDVIIIPSALDFVSQDEMLTPLGRLDKYAASENVFNR), 65–81 (MVARSLLDTLREVCDDE), 82–119 (RDCIAVLERISRLADDSEPTVRAELMEQVPHIALFCQE), 127–164 (AFSKYLLPIVVRYLADQNNQVRKTSQAALLALLEQELI), 168–206 (DVETKVCPVLIDLTAPDSNDDVKTEAVAIMCKMAPMVGK), 208–246 (ITERLILPRFCEMCCDCRMFHVRKVCAANFGDICSVVGQ), 248–285 (ATEEMLLPRFFQLCSDNVWGVRKACAECFMAVSCATCQ), and 287–324 (IRRTKLSALFINLISDPSRWVRQAAFQSLGPFISTFAN). Disordered regions lie at residues 325-377 (PSSS…HSSA), 411-451 (SESP…PLDQ), and 474-499 (QQDPEERLSPERTGDVPAAPLPGPPN). Residues 332–365 (FKDESKSSEDSSAEDKDRMRDNDVVEEEHRRPED) are compositionally biased toward basic and acidic residues. Polar residues-rich tracts occupy residues 411–421 (SESPQEAASND) and 430–445 (NSKSASRPDAGTSSPE). Residues 474-487 (QQDPEERLSPERTG) are compositionally biased toward basic and acidic residues. One copy of the HEAT 9 repeat lies at 506 to 543 (KELEEMIENLEPHMDDPDVKAQVDVLSAALRASSLDAH). The disordered stretch occupies residues 590–612 (DYVHGGADVSPGDGFSPDEDRRP). HEAT repeat units lie at residues 699–735 (LTAADLVPIFNGFLKDLDEVRIGVLKHLHDFLKLLHI), 800–838 (WISYKLVSEMVKKLHTATPPTFGVDLINELVENFGRCPK), and 862–899 (QFAVHLMPHLLTLANDRVPNVRVLLAKTLRQTLLEKEY). S936 carries the phosphoserine modification.

As to quaternary structure, serine/threonine-protein phosphatase 4 (PP4) occurs in different assemblies of the catalytic and one or more regulatory subunits. Component of the PP4 complex PPP4C-PPP4R1. Interacts with HDAC3.

Its function is as follows. Regulatory subunit of serine/threonine-protein phosphatase 4. May play a role in regulation of cell division in renal glomeruli. The PPP4C-PPP4R1 PP4 complex may play a role in dephosphorylation and regulation of HDAC3. Plays a role in the inhibition of TNF-induced NF-kappa-B activation by regulating the dephosphorylation of TRAF2. The chain is Serine/threonine-protein phosphatase 4 regulatory subunit 1 (Ppp4r1) from Mus musculus (Mouse).